Here is a 431-residue protein sequence, read N- to C-terminus: Probable 3-hydroxy-3-methylglutaryl-coenzyme A reductase (431 aa).

Residues Glu-85 and Asp-278 each act as charge relay system in the active site. His-375 serves as the catalytic Proton donor.

This sequence belongs to the HMG-CoA reductase family.

The catalysed reaction is (R)-mevalonate + 2 NAD(+) + CoA = (3S)-3-hydroxy-3-methylglutaryl-CoA + 2 NADH + 2 H(+). It participates in metabolic intermediate metabolism; (R)-mevalonate degradation; (S)-3-hydroxy-3-methylglutaryl-CoA from (R)-mevalonate: step 1/1. Converts HMG-CoA to mevalonate. The sequence is that of Probable 3-hydroxy-3-methylglutaryl-coenzyme A reductase from Borreliella burgdorferi (strain ATCC 35210 / DSM 4680 / CIP 102532 / B31) (Borrelia burgdorferi).